Reading from the N-terminus, the 172-residue chain is Large ribosomal subunit protein uL10 (172 aa).

The protein belongs to the universal ribosomal protein uL10 family. In terms of assembly, part of the ribosomal stalk of the 50S ribosomal subunit. The N-terminus interacts with L11 and the large rRNA to form the base of the stalk. The C-terminus forms an elongated spine to which L12 dimers bind in a sequential fashion forming a multimeric L10(L12)X complex.

Functionally, forms part of the ribosomal stalk, playing a central role in the interaction of the ribosome with GTP-bound translation factors. In Chlorobium chlorochromatii (strain CaD3), this protein is Large ribosomal subunit protein uL10.